The sequence spans 95 residues: NATGQGNISISLVPPSKAVEXHQXQQIFIEAKASKIFNCRMEWEKVERGRRTSLCTHDPAKICSRDHAQSSATWSCSQPFKVVCVYIAFYSTDYR.

Residues Asn-1 and Asn-7 are each glycosylated (N-linked (GlcNAc...) asparagine). The tract at residues 1–21 is III; the sequence is NATGQGNISISLVPPSKAVEX. The segment at 22–30 is IV (linker domain); sequence HQXQQIFIE. The tract at residues 31 to 95 is v (Cys-rich); that stretch reads AKASKIFNCR…YIAFYSTDYR (65 aa).

It belongs to the neurexophilin family.

It localises to the secreted. In terms of biological role, may be signaling molecules that resemble neuropeptides. Ligand for alpha-neurexins. The chain is Neurexophilin-3 (NXPH3) from Macaca mulatta (Rhesus macaque).